Reading from the N-terminus, the 629-residue chain is Phosphomethylpyrimidine synthase (629 aa).

A disordered region spans residues 1–30 (MTTKLKNASNLSESAQVDQQSVQPFTRSQK). Substrate contacts are provided by residues Asn-233, Met-262, Tyr-291, His-327, 347–349 (SRG), 388–391 (DGLR), and Glu-427. Position 431 (His-431) interacts with Zn(2+). A substrate-binding site is contributed by Tyr-454. Residue His-495 participates in Zn(2+) binding. Positions 575, 578, and 583 each coordinate [4Fe-4S] cluster.

This sequence belongs to the ThiC family. As to quaternary structure, homodimer. The cofactor is [4Fe-4S] cluster.

The enzyme catalyses 5-amino-1-(5-phospho-beta-D-ribosyl)imidazole + S-adenosyl-L-methionine = 4-amino-2-methyl-5-(phosphooxymethyl)pyrimidine + CO + 5'-deoxyadenosine + formate + L-methionine + 3 H(+). Its pathway is cofactor biosynthesis; thiamine diphosphate biosynthesis. In terms of biological role, catalyzes the synthesis of the hydroxymethylpyrimidine phosphate (HMP-P) moiety of thiamine from aminoimidazole ribotide (AIR) in a radical S-adenosyl-L-methionine (SAM)-dependent reaction. This chain is Phosphomethylpyrimidine synthase, found in Pseudomonas fluorescens (strain ATCC BAA-477 / NRRL B-23932 / Pf-5).